Here is a 324-residue protein sequence, read N- to C-terminus: DNA repair and recombination protein RadA (324 aa).

An ATP-binding site is contributed by 107 to 114; sequence GEFGSGKS.

Belongs to the eukaryotic RecA-like protein family.

Its function is as follows. Involved in DNA repair and in homologous recombination. Binds and assemble on single-stranded DNA to form a nucleoprotein filament. Hydrolyzes ATP in a ssDNA-dependent manner and promotes DNA strand exchange between homologous DNA molecules. This chain is DNA repair and recombination protein RadA, found in Methanoculleus marisnigri (strain ATCC 35101 / DSM 1498 / JR1).